An 80-amino-acid polypeptide reads, in one-letter code: Small ribosomal subunit protein bS18 (80 aa).

It belongs to the bacterial ribosomal protein bS18 family. In terms of assembly, part of the 30S ribosomal subunit. Forms a tight heterodimer with protein bS6.

Functionally, binds as a heterodimer with protein bS6 to the central domain of the 16S rRNA, where it helps stabilize the platform of the 30S subunit. This is Small ribosomal subunit protein bS18 from Staphylococcus aureus (strain Mu3 / ATCC 700698).